The sequence spans 362 residues: Chorismate synthase (362 aa).

Positions 48 and 54 each coordinate NADP(+). Residues 125-127, 238-239, glycine 278, 293-297, and arginine 319 contribute to the FMN site; these read RSS, NA, and KPTSS.

This sequence belongs to the chorismate synthase family. As to quaternary structure, homotetramer. FMNH2 is required as a cofactor.

It carries out the reaction 5-O-(1-carboxyvinyl)-3-phosphoshikimate = chorismate + phosphate. Its pathway is metabolic intermediate biosynthesis; chorismate biosynthesis; chorismate from D-erythrose 4-phosphate and phosphoenolpyruvate: step 7/7. Catalyzes the anti-1,4-elimination of the C-3 phosphate and the C-6 proR hydrogen from 5-enolpyruvylshikimate-3-phosphate (EPSP) to yield chorismate, which is the branch point compound that serves as the starting substrate for the three terminal pathways of aromatic amino acid biosynthesis. This reaction introduces a second double bond into the aromatic ring system. This Aeromonas salmonicida (strain A449) protein is Chorismate synthase.